The primary structure comprises 802 residues: Endoplasmin (802 aa).

The signal sequence occupies residues 1–21 (MRVLWVLGLCCVLLTFGFVRA). Positions 42-44 (SRT) match the SRT pseudosubstrate motif motif. N-linked (GlcNAc...) asparagine glycosylation is present at Asn-62. Residue Ser-64 is modified to Phosphoserine. N-linked (GlcNAc...) asparagine glycosylation is present at Asn-107. ATP contacts are provided by Asn-107, Asp-149, and Asn-162. N6-(2-hydroxyisobutyryl)lysine is present on Lys-168. At Ser-172 the chain carries Phosphoserine. Residue Phe-199 coordinates ATP. Asn-217 carries an N-linked (GlcNAc...) asparagine glycan. The segment covering 290–317 (EEPLEEDEAAKEEKEESDDEAAVEEEEE) has biased composition (acidic residues). Residues 290–323 (EEPLEEDEAAKEEKEESDDEAAVEEEEEEKKPKT) form a disordered region. Phosphoserine occurs at positions 306 and 403. An N6-succinyllysine modification is found at Lys-404. Asn-445 carries an N-linked (GlcNAc...) asparagine glycan. Ser-447 is subject to Phosphoserine. An N6-acetyllysine modification is found at Lys-479. N-linked (GlcNAc...) asparagine glycans are attached at residues Asn-481 and Asn-502. Position 633 is an N6-succinyllysine (Lys-633). The interval 749–802 (IDPEAQVEEEPEEEPEDTSEDAEDSEQDEGEEMDAGTEEEEEETEKESTEKDEL) is disordered. A compositionally biased stretch (acidic residues) spans 753–793 (AQVEEEPEEEPEDTSEDAEDSEQDEGEEMDAGTEEEEEETE). Phosphothreonine is present on Thr-785. A Prevents secretion from ER motif is present at residues 799–802 (KDEL).

The protein belongs to the heat shock protein 90 family. As to quaternary structure, homodimer; disulfide-linked. Component of an EIF2 complex at least composed of CELF1/CUGBP1, CALR, CALR3, EIF2S1, EIF2S2, HSP90B1 and HSPA5. Part of a large chaperone multiprotein complex comprising DNAJB11, HSP90B1, HSPA5, HYOU, PDIA2, PDIA4, PDIA6, PPIB, SDF2L1, UGGT1 and very small amounts of ERP29, but not, or at very low levels, CALR nor CANX. Hyperglycosylated form interacts with OS9; promoting its degradation by the endoplasmic reticulum associated degradation (ERAD). Interacts with AIMP1; regulates its retention in the endoplasmic reticulum. Interacts with CNPY3; this interaction is disrupted in the presence of ATP. Interacts with TLR4, TLR9 and TLR11, but not with TLR3. Interacts with MZB1 in a calcium-dependent manner. Interacts with METTL23. Interacts with IL1B; the interaction facilitates cargo translocation into the ERGIC. Interacts with EIF2AK3. In terms of processing, phosphorylated by CK2. Post-translationally, N-glycosylated cotranslationally at Asn-217 by STT3A-containing OST-A complex: this glycosylation is constitutive. In response to various stress, 5 additional facultative sites (Asn-62, Asn-107, Asn-445, Asn-481 and Asn-502) can be glycosylated post-translationally by STT3B-containing OST-B complex, leading to a hyperglycosylated form that is degraded by the ER-associated degradation (ERAD) pathway. In normal conditions, the OST-A complex together with CCDC134 prevent glycosylation at facultative sites during protein folding, thereby preventing hyperglycosylation. Mechanistically, nascent HSP90B1 is tethered during translation to a specialized CCDC134-containing translocon that forms a microenvironment for its folding, in which STT3A associates with the SRT pseudosubstrate motif, and prevents access to facultative glycosylation sites until folding is completed, rendering its facultative sites inaccessible to the OST-B complex.

It localises to the endoplasmic reticulum lumen. The protein localises to the sarcoplasmic reticulum lumen. Its subcellular location is the melanosome. The enzyme catalyses ATP + H2O = ADP + phosphate + H(+). In terms of biological role, ATP-dependent chaperone involved in the processing of proteins in the endoplasmic reticulum, regulating their transport. Together with MESD, acts as a modulator of the Wnt pathway by promoting the folding of LRP6, a coreceptor of the canonical Wnt pathway. When associated with CNPY3, required for proper folding of Toll-like receptors. Promotes folding and trafficking of TLR4 to the cell surface. May participate in the unfolding of cytosolic leaderless cargos (lacking the secretion signal sequence) such as the interleukin 1/IL-1 to facilitate their translocation into the ERGIC (endoplasmic reticulum-Golgi intermediate compartment) and secretion; the translocation process is mediated by the cargo receptor TMED10. This is Endoplasmin (Hsp90b1) from Mus musculus (Mouse).